The sequence spans 76 residues: uncharacterized protein (76 aa).

This is an uncharacterized protein from Archaeoglobus fulgidus (strain ATCC 49558 / DSM 4304 / JCM 9628 / NBRC 100126 / VC-16).